A 180-amino-acid chain; its full sequence is Ribosome-recycling factor (180 aa).

It belongs to the RRF family.

It localises to the cytoplasm. Functionally, responsible for the release of ribosomes from messenger RNA at the termination of protein biosynthesis. May increase the efficiency of translation by recycling ribosomes from one round of translation to another. This Chlamydia caviae (strain ATCC VR-813 / DSM 19441 / 03DC25 / GPIC) (Chlamydophila caviae) protein is Ribosome-recycling factor.